Here is a 376-residue protein sequence, read N- to C-terminus: Queuine tRNA-ribosyltransferase (376 aa).

Aspartate 90 functions as the Proton acceptor in the catalytic mechanism. Substrate-binding positions include 90-94 (DSGGF), aspartate 144, glutamine 193, and glycine 220. The interval 251-257 (GVGTPED) is RNA binding. The active-site Nucleophile is the aspartate 270. Residues 275–279 (TRNAR) form an RNA binding; important for wobble base 34 recognition region. Zn(2+) is bound by residues cysteine 308, cysteine 310, cysteine 313, and histidine 339.

Belongs to the queuine tRNA-ribosyltransferase family. As to quaternary structure, homodimer. Within each dimer, one monomer is responsible for RNA recognition and catalysis, while the other monomer binds to the replacement base PreQ1. It depends on Zn(2+) as a cofactor.

It carries out the reaction 7-aminomethyl-7-carbaguanine + guanosine(34) in tRNA = 7-aminomethyl-7-carbaguanosine(34) in tRNA + guanine. It participates in tRNA modification; tRNA-queuosine biosynthesis. In terms of biological role, catalyzes the base-exchange of a guanine (G) residue with the queuine precursor 7-aminomethyl-7-deazaguanine (PreQ1) at position 34 (anticodon wobble position) in tRNAs with GU(N) anticodons (tRNA-Asp, -Asn, -His and -Tyr). Catalysis occurs through a double-displacement mechanism. The nucleophile active site attacks the C1' of nucleotide 34 to detach the guanine base from the RNA, forming a covalent enzyme-RNA intermediate. The proton acceptor active site deprotonates the incoming PreQ1, allowing a nucleophilic attack on the C1' of the ribose to form the product. After dissociation, two additional enzymatic reactions on the tRNA convert PreQ1 to queuine (Q), resulting in the hypermodified nucleoside queuosine (7-(((4,5-cis-dihydroxy-2-cyclopenten-1-yl)amino)methyl)-7-deazaguanosine). The chain is Queuine tRNA-ribosyltransferase from Campylobacter concisus (strain 13826).